Here is a 67-residue protein sequence, read N- to C-terminus: Bombesin (67 aa).

Residues 1–30 (MSLLPAVKVLPLGYLGIVLVFSLILRSAMV) form the signal peptide. A propeptide spanning residues 31 to 49 (DFIQDAGKLERIDTYKREA) is cleaved from the precursor. At glutamine 50 the chain carries Pyrrolidone carboxylic acid. Methionine amide is present on methionine 64.

It belongs to the bombesin/neuromedin-B/ranatensin family. As to expression, expressed by the skin dorsal glands.

It localises to the secreted. Functionally, stimulates smooth muscle contraction in isolated rat stomach strip. This chain is Bombesin, found in Sanguirana varians (Palawan frog).